We begin with the raw amino-acid sequence, 239 residues long: Phosphoribosylaminoimidazole-succinocarboxamide synthase (239 aa).

The protein belongs to the SAICAR synthetase family.

It catalyses the reaction 5-amino-1-(5-phospho-D-ribosyl)imidazole-4-carboxylate + L-aspartate + ATP = (2S)-2-[5-amino-1-(5-phospho-beta-D-ribosyl)imidazole-4-carboxamido]succinate + ADP + phosphate + 2 H(+). Its pathway is purine metabolism; IMP biosynthesis via de novo pathway; 5-amino-1-(5-phospho-D-ribosyl)imidazole-4-carboxamide from 5-amino-1-(5-phospho-D-ribosyl)imidazole-4-carboxylate: step 1/2. The protein is Phosphoribosylaminoimidazole-succinocarboxamide synthase of Bacillus mycoides (strain KBAB4) (Bacillus weihenstephanensis).